The sequence spans 289 residues: MLKNLFRKTKYITVSQKNIENYKRENTPTIPDGMWVKCNKCGEILYQNDLEKNYMACNLCGNHFRIGAKERIKYLFDKDTFKEWDYKVKTENPLSFKGYDEKIENIKEETNLSEAVTTGKGKIADMEVVVCIMDSKFMMGSMGSVVGEKITRAIERAIELRLPVIIFTVSGGARMQEGILSLMQMAKVSSALAKLDEEGLLYICVLTDPTTGGVTASFAMLGDIILAEPDALIGFAGKRVIEQTINEKLPEDFQKSEFLLEHGFIDKIVPRSDLRKVLAKLINMHKNSF.

The CoA carboxyltransferase N-terminal domain maps to M34–F289. Positions 38, 41, 57, and 60 each coordinate Zn(2+). Residues C38 to C60 form a C4-type zinc finger.

This sequence belongs to the AccD/PCCB family. In terms of assembly, acetyl-CoA carboxylase is a heterohexamer composed of biotin carboxyl carrier protein (AccB), biotin carboxylase (AccC) and two subunits each of ACCase subunit alpha (AccA) and ACCase subunit beta (AccD). It depends on Zn(2+) as a cofactor.

It is found in the cytoplasm. The enzyme catalyses N(6)-carboxybiotinyl-L-lysyl-[protein] + acetyl-CoA = N(6)-biotinyl-L-lysyl-[protein] + malonyl-CoA. It participates in lipid metabolism; malonyl-CoA biosynthesis; malonyl-CoA from acetyl-CoA: step 1/1. In terms of biological role, component of the acetyl coenzyme A carboxylase (ACC) complex. Biotin carboxylase (BC) catalyzes the carboxylation of biotin on its carrier protein (BCCP) and then the CO(2) group is transferred by the transcarboxylase to acetyl-CoA to form malonyl-CoA. The sequence is that of Acetyl-coenzyme A carboxylase carboxyl transferase subunit beta from Clostridium botulinum (strain Loch Maree / Type A3).